The sequence spans 108 residues: UPF0060 membrane protein KPK_2870 (108 aa).

A run of 4 helical transmembrane segments spans residues 6 to 26 (LLFFATALCEIIGCYLPWLWL), 29 to 49 (GATPLLLIPTGLALALFVWLL), 61 to 81 (AAYGGVYVCTALLWLRVVDGV), and 86 to 106 (YDWAGAIIALCGMLIIVAGWG).

The protein belongs to the UPF0060 family.

Its subcellular location is the cell inner membrane. This Klebsiella pneumoniae (strain 342) protein is UPF0060 membrane protein KPK_2870.